The following is a 179-amino-acid chain: Sec-independent protein translocase protein TatB (179 aa).

The helical transmembrane segment at 1–21 (MLDLGLSKMALIGVVALVVLG) threads the bilayer. Low complexity predominate over residues 101 to 115 (GAAGDAGSVGSPGSD). Residues 101–134 (GAAGDAGSVGSPGSDTPAAPSWRGSSAALAPKRR) form a disordered region.

This sequence belongs to the TatB family. The Tat system comprises two distinct complexes: a TatABC complex, containing multiple copies of TatA, TatB and TatC subunits, and a separate TatA complex, containing only TatA subunits. Substrates initially bind to the TatABC complex, which probably triggers association of the separate TatA complex to form the active translocon.

The protein resides in the cell inner membrane. Functionally, part of the twin-arginine translocation (Tat) system that transports large folded proteins containing a characteristic twin-arginine motif in their signal peptide across membranes. Together with TatC, TatB is part of a receptor directly interacting with Tat signal peptides. TatB may form an oligomeric binding site that transiently accommodates folded Tat precursor proteins before their translocation. This Burkholderia orbicola (strain AU 1054) protein is Sec-independent protein translocase protein TatB.